Reading from the N-terminus, the 143-residue chain is Peptide methionine sulfoxide reductase MsrB (143 aa).

The MsrB domain occupies 16 to 139; the sequence is DAELRRRLTP…NSAALNFESR (124 aa). The Zn(2+) site is built by C55, C58, C104, and C107. The Nucleophile role is filled by C128.

This sequence belongs to the MsrB Met sulfoxide reductase family. Zn(2+) is required as a cofactor.

The catalysed reaction is L-methionyl-[protein] + [thioredoxin]-disulfide + H2O = L-methionyl-(R)-S-oxide-[protein] + [thioredoxin]-dithiol. The protein is Peptide methionine sulfoxide reductase MsrB of Burkholderia ambifaria (strain ATCC BAA-244 / DSM 16087 / CCUG 44356 / LMG 19182 / AMMD) (Burkholderia cepacia (strain AMMD)).